The following is a 78-amino-acid chain: Surfactant-associated protein 2 (78 aa).

An N-terminal signal peptide occupies residues 1 to 19; sequence MGSGLPLVLLLTLLGSSHG. A glycan (N-linked (GlcNAc...) asparagine) is linked at Asn-37.

In terms of processing, N-glycosylated. As to expression, predominantly expressed in lung, where it is detected in type II pneumocytes in the alveolus, and in nonciliated epithelium in bronchioli (at protein level). Also detected at lower levels in cervix, esophagus, stomach, testis and kidney.

It is found in the secreted. The protein resides in the cytoplasmic vesicle. The protein localises to the secretory vesicle. It localises to the golgi apparatus. Functionally, putative surfactant protein. In Homo sapiens (Human), this protein is Surfactant-associated protein 2 (SFTA2).